A 381-amino-acid polypeptide reads, in one-letter code: N-acetylglucosamine-6-phosphate deacetylase (381 aa).

Residue Glu-129 participates in a divalent metal cation binding. 140-141 (VH) is a substrate binding site. A divalent metal cation-binding residues include His-193 and His-214. Residues 217 to 218 (NA), Arg-226, and 246 to 249 (DGVH) each bind substrate. The active-site Proton donor/acceptor is the Asp-271. 306-308 (IAG) is a substrate binding site.

Belongs to the metallo-dependent hydrolases superfamily. NagA family. In terms of assembly, homotetramer. A divalent metal cation is required as a cofactor.

It catalyses the reaction N-acetyl-D-glucosamine 6-phosphate + H2O = D-glucosamine 6-phosphate + acetate. The protein operates within amino-sugar metabolism; N-acetylneuraminate degradation; D-fructose 6-phosphate from N-acetylneuraminate: step 4/5. Its function is as follows. Involved in the first committed step in the biosynthesis of amino-sugar-nucleotides. Catalyzes the hydrolysis of the N-acetyl group of N-acetylglucosamine-6-phosphate (GlcNAc-6-P) to yield glucosamine 6-phosphate and acetate. In Haemophilus influenzae (strain ATCC 51907 / DSM 11121 / KW20 / Rd), this protein is N-acetylglucosamine-6-phosphate deacetylase (nagA).